A 348-amino-acid chain; its full sequence is Probable dual-specificity RNA methyltransferase RlmN (348 aa).

Residue Glu93 is the Proton acceptor of the active site. Residues 99-333 (TEKRLTACLS…VSLRKSRGLD (235 aa)) enclose the Radical SAM core domain. Cys106 and Cys338 are oxidised to a cystine. Residues Cys113, Cys117, and Cys120 each coordinate [4Fe-4S] cluster. S-adenosyl-L-methionine is bound by residues 160-161 (GE), Ser190, 219-221 (SLH), and Asn295. Cys338 serves as the catalytic S-methylcysteine intermediate.

Belongs to the radical SAM superfamily. RlmN family. The cofactor is [4Fe-4S] cluster.

Its subcellular location is the cytoplasm. It catalyses the reaction adenosine(2503) in 23S rRNA + 2 reduced [2Fe-2S]-[ferredoxin] + 2 S-adenosyl-L-methionine = 2-methyladenosine(2503) in 23S rRNA + 5'-deoxyadenosine + L-methionine + 2 oxidized [2Fe-2S]-[ferredoxin] + S-adenosyl-L-homocysteine. The enzyme catalyses adenosine(37) in tRNA + 2 reduced [2Fe-2S]-[ferredoxin] + 2 S-adenosyl-L-methionine = 2-methyladenosine(37) in tRNA + 5'-deoxyadenosine + L-methionine + 2 oxidized [2Fe-2S]-[ferredoxin] + S-adenosyl-L-homocysteine. In terms of biological role, specifically methylates position 2 of adenine 2503 in 23S rRNA and position 2 of adenine 37 in tRNAs. In Prochlorococcus marinus (strain MIT 9215), this protein is Probable dual-specificity RNA methyltransferase RlmN.